The following is a 185-amino-acid chain: Photosystem I assembly protein Ycf4 (185 aa).

2 helical membrane passes run 20-40 (GNFF…AVGA) and 57-77 (ILFF…LFIS).

Belongs to the Ycf4 family.

The protein resides in the plastid. Its subcellular location is the chloroplast thylakoid membrane. Functionally, seems to be required for the assembly of the photosystem I complex. This chain is Photosystem I assembly protein Ycf4, found in Oryza nivara (Indian wild rice).